Reading from the N-terminus, the 319-residue chain is Ankyrin repeat domain-containing protein 1 (319 aa).

The stretch at 55–89 (LGEEQRKSEKVREAELKKKKLEQRSKLENLEDLEI) forms a coiled coil. ANK repeat units follow at residues 152-181 (YKRTALHRACLEGHLAIVEKLMEAGAQIEF), 185-214 (LESTAIHWACRGGNLDVLKLLLNKGAKISA), 218-247 (LLSTALHVAVRTGHYECAEHLIACEADLNA), 251-280 (EGDTPLHDAVRLNRYKMIRLLMTFGADLNV), and 284-315 (AGKTPMDLVLHWQNGTKAIFDSLKENAYKNSR).

In terms of assembly, interacts with TTN/titin. Interacts with YBX1. Expressed in heart, cardiac muscle.

Its subcellular location is the nucleus. May play an important role in endothelial cell activation. May act as a nuclear transcription factor that negatively regulates the expression of cardiac genes. In Rattus norvegicus (Rat), this protein is Ankyrin repeat domain-containing protein 1 (Ankrd1).